Here is a 416-residue protein sequence, read N- to C-terminus: Histidine--tRNA ligase (416 aa).

Belongs to the class-II aminoacyl-tRNA synthetase family.

The protein localises to the cytoplasm. The enzyme catalyses tRNA(His) + L-histidine + ATP = L-histidyl-tRNA(His) + AMP + diphosphate + H(+). This is Histidine--tRNA ligase from Methanococcus maripaludis (strain DSM 14266 / JCM 13030 / NBRC 101832 / S2 / LL).